The chain runs to 497 residues: NAD(P)H-quinone oxidoreductase chain 4, chloroplastic (497 aa).

13 consecutive transmembrane segments (helical) span residues 4–24, 35–55, 87–107, 113–133, 134–154, 167–187, 207–227, 242–262, 274–294, 313–333, 386–406, 416–436, and 462–482; these read LPWL…IPLF, YTLG…CCHF, MGLI…AWPV, LFHF…ASQD, ILLF…LLSI, FILY…TIGL, IALE…KLPI, HYST…YGLI, AIFA…ASLI, MGFV…GAIL, LALP…GIVI, IVIT…LLSM, and IFIS…PNLV.

The protein belongs to the complex I subunit 4 family.

The protein localises to the plastid. Its subcellular location is the chloroplast thylakoid membrane. The catalysed reaction is a plastoquinone + NADH + (n+1) H(+)(in) = a plastoquinol + NAD(+) + n H(+)(out). It carries out the reaction a plastoquinone + NADPH + (n+1) H(+)(in) = a plastoquinol + NADP(+) + n H(+)(out). The sequence is that of NAD(P)H-quinone oxidoreductase chain 4, chloroplastic from Angiopteris evecta (Mule's foot fern).